The primary structure comprises 554 residues: Terpene synthase 17 (554 aa).

The Mg(2+) site is built by Asp-306, Asp-310, and Glu-458. The DDXXD motif signature appears at 306–310 (DDTYD).

This sequence belongs to the terpene synthase family. Tpsa subfamily. It depends on Mg(2+) as a cofactor. Mn(2+) serves as cofactor.

It carries out the reaction (2E,6E)-farnesyl diphosphate = (+)-valencene + diphosphate. The catalysed reaction is (2E,6E)-farnesyl diphosphate = (E)-beta-farnesene + diphosphate. The enzyme catalyses (2E,6E)-farnesyl diphosphate = gamma-gurjunene + diphosphate. It catalyses the reaction (2Z,6Z)-farnesyl diphosphate = beta-bisabolene + diphosphate. It carries out the reaction (2Z,6Z)-farnesyl diphosphate = (E)-gamma-bisabolene + diphosphate. The catalysed reaction is (2E)-geranyl diphosphate = limonene + diphosphate. The enzyme catalyses (2E)-geranyl diphosphate = beta-myrcene + diphosphate. It catalyses the reaction (2E)-geranyl diphosphate = (E)-beta-ocimene + diphosphate. It carries out the reaction (2E)-geranyl diphosphate = terpinolene + diphosphate. The catalysed reaction is (2E)-geranyl diphosphate = gamma-terpinene + diphosphate. The enzyme catalyses (2Z,6Z)-farnesyl diphosphate = (Z)-gamma-bisabolene + diphosphate. It catalyses the reaction (2E,6E)-farnesyl diphosphate = (1S,5S,6R)-alpha-bergamotene + diphosphate. It carries out the reaction (2Z,6Z)-farnesyl diphosphate = (1S,5S,6S)-alpha-bergamotene + diphosphate. The protein operates within secondary metabolite biosynthesis; terpenoid biosynthesis. In terms of biological role, sesquiterpene synthase involved in the biosynthesis of volatile compounds. Mediates the conversion of (2E,6E)-farnesyl diphosphate (FPP) into gamma-gurjunene, (E)-beta-farnesene and (+)-valencene, and of (2Z,6Z)-farnesyl diphosphate ((ZZ)-FPP) into (E)-alpha-bergamotene and (Z)-gamma-bisabolene as well as beta-bisabolene, (Z)-alpha-bergamotene and (E)-gamma-bisabolene to a lower extent. Can act with a low efficiency as a monoterpene synthase with geranyl diphosphate (GPP) as substrate, thus producing beta-myrcene, (E)-beta-ocimene, limonene, terpinolene, gamma-terpinene and (Z)-beta-ocimene. The protein is Terpene synthase 17 of Solanum habrochaites (Wild tomato).